Here is a 138-residue protein sequence, read N- to C-terminus: Small ribosomal subunit protein uS11c (138 aa).

A disordered region spans residues 1-23 (MKKPIPRIGSRRNGRIGSRKNGR).

Belongs to the universal ribosomal protein uS11 family. As to quaternary structure, part of the 30S ribosomal subunit.

The protein localises to the plastid. Its subcellular location is the chloroplast. The protein is Small ribosomal subunit protein uS11c of Amborella trichopoda.